Reading from the N-terminus, the 459-residue chain is Siroheme synthase 2 (459 aa).

Positions methionine 1 to threonine 204 are precorrin-2 dehydrogenase /sirohydrochlorin ferrochelatase. Residues glutamate 22–isoleucine 23 and leucine 43–aspartate 44 contribute to the NAD(+) site. Serine 128 carries the phosphoserine modification. The segment at glycine 216–alanine 459 is uroporphyrinogen-III C-methyltransferase. Proline 225 provides a ligand contact to S-adenosyl-L-methionine. Aspartate 248 serves as the catalytic Proton acceptor. Residue lysine 270 is the Proton donor of the active site. Residues glycine 301–aspartate 303, isoleucine 306, threonine 331–alanine 332, methionine 382, and glycine 411 each bind S-adenosyl-L-methionine.

It in the N-terminal section; belongs to the precorrin-2 dehydrogenase / sirohydrochlorin ferrochelatase family. The protein in the C-terminal section; belongs to the precorrin methyltransferase family.

The enzyme catalyses uroporphyrinogen III + 2 S-adenosyl-L-methionine = precorrin-2 + 2 S-adenosyl-L-homocysteine + H(+). The catalysed reaction is precorrin-2 + NAD(+) = sirohydrochlorin + NADH + 2 H(+). It carries out the reaction siroheme + 2 H(+) = sirohydrochlorin + Fe(2+). Its pathway is cofactor biosynthesis; adenosylcobalamin biosynthesis; precorrin-2 from uroporphyrinogen III: step 1/1. It functions in the pathway cofactor biosynthesis; adenosylcobalamin biosynthesis; sirohydrochlorin from precorrin-2: step 1/1. It participates in porphyrin-containing compound metabolism; siroheme biosynthesis; precorrin-2 from uroporphyrinogen III: step 1/1. The protein operates within porphyrin-containing compound metabolism; siroheme biosynthesis; siroheme from sirohydrochlorin: step 1/1. Its pathway is porphyrin-containing compound metabolism; siroheme biosynthesis; sirohydrochlorin from precorrin-2: step 1/1. Multifunctional enzyme that catalyzes the SAM-dependent methylations of uroporphyrinogen III at position C-2 and C-7 to form precorrin-2 via precorrin-1. Then it catalyzes the NAD-dependent ring dehydrogenation of precorrin-2 to yield sirohydrochlorin. Finally, it catalyzes the ferrochelation of sirohydrochlorin to yield siroheme. This is Siroheme synthase 2 from Pectobacterium atrosepticum (strain SCRI 1043 / ATCC BAA-672) (Erwinia carotovora subsp. atroseptica).